The following is a 303-amino-acid chain: Methionyl-tRNA formyltransferase (303 aa).

109-112 contacts (6S)-5,6,7,8-tetrahydrofolate; sequence SLLP.

Belongs to the Fmt family.

It carries out the reaction L-methionyl-tRNA(fMet) + (6R)-10-formyltetrahydrofolate = N-formyl-L-methionyl-tRNA(fMet) + (6S)-5,6,7,8-tetrahydrofolate + H(+). Its function is as follows. Attaches a formyl group to the free amino group of methionyl-tRNA(fMet). The formyl group appears to play a dual role in the initiator identity of N-formylmethionyl-tRNA by promoting its recognition by IF2 and preventing the misappropriation of this tRNA by the elongation apparatus. The polypeptide is Methionyl-tRNA formyltransferase (Helicobacter pylori (strain ATCC 700392 / 26695) (Campylobacter pylori)).